Here is a 350-residue protein sequence, read N- to C-terminus: tRNA uridine(34) hydroxylase (350 aa).

One can recognise a Rhodanese domain in the interval 146–240 (DDPDALFIDM…YARKAREQGL (95 aa)). The Cysteine persulfide intermediate role is filled by C200.

It belongs to the TrhO family.

It catalyses the reaction uridine(34) in tRNA + AH2 + O2 = 5-hydroxyuridine(34) in tRNA + A + H2O. In terms of biological role, catalyzes oxygen-dependent 5-hydroxyuridine (ho5U) modification at position 34 in tRNAs, the first step in 5-carboxymethoxyuridine (cmo5U) biosynthesis. May be part of an alternate pathway, which is able to bypass cmo5U biogenesis in a subset of tRNAs under aerobic conditions. In Escherichia coli O45:K1 (strain S88 / ExPEC), this protein is tRNA uridine(34) hydroxylase.